A 441-amino-acid chain; its full sequence is Mitochondrial distribution and morphology protein 12 (441 aa).

In terms of domain architecture, SMP-LTD spans 1–441; that stretch reads MSIDIDWERA…VYPSFWTFLV (441 aa). Disordered stretches follow at residues 70–89 and 180–289; these read YEDG…PMRE and TPLR…RMRE. 2 stretches are compositionally biased toward polar residues: residues 226–245 and 253–263; these read SRPS…SVST and SSQTVLANNPG.

This sequence belongs to the MDM12 family. In terms of assembly, component of the ER-mitochondria encounter structure (ERMES) or MDM complex, composed of MMM1, MDM10, MDM12 and MDM34. An MMM1 homodimer associates with one molecule of MDM12 on each side in a pairwise head-to-tail manner, and the SMP-LTD domains of MMM1 and MDM12 generate a continuous hydrophobic tunnel for phospholipid trafficking.

The protein localises to the mitochondrion outer membrane. It is found in the endoplasmic reticulum membrane. In terms of biological role, component of the ERMES/MDM complex, which serves as a molecular tether to connect the endoplasmic reticulum (ER) and mitochondria. Components of this complex are involved in the control of mitochondrial shape and protein biogenesis, and function in nonvesicular lipid trafficking between the ER and mitochondria. MDM12 is required for the interaction of the ER-resident membrane protein MMM1 and the outer mitochondrial membrane-resident beta-barrel protein MDM10. The MDM12-MMM1 subcomplex functions in the major beta-barrel assembly pathway that is responsible for biogenesis of all mitochondrial outer membrane beta-barrel proteins, and acts in a late step after the SAM complex. The MDM10-MDM12-MMM1 subcomplex further acts in the TOM40-specific pathway after the action of the MDM12-MMM1 complex. Essential for establishing and maintaining the structure of mitochondria and maintenance of mtDNA nucleoids. In Paracoccidioides brasiliensis (strain Pb03), this protein is Mitochondrial distribution and morphology protein 12.